A 270-amino-acid chain; its full sequence is Structure-specific endonuclease subunit SLX1 (270 aa).

A GIY-YIG domain is found at R9 to V94. The SLX1-type zinc-finger motif lies at C182–C234.

It belongs to the SLX1 family. In terms of assembly, forms a heterodimer with SLX4. A divalent metal cation serves as cofactor. In terms of tissue distribution, expressed in testis, colon, bone marrow, brain, thymus and to a lesser extent in heart, kidney, skeletal muscle and spleen.

It localises to the nucleus. Catalytic subunit of the SLX1-SLX4 structure-specific endonuclease that resolves DNA secondary structures generated during DNA repair and recombination. Has endonuclease activity towards branched DNA substrates, introducing single-strand cuts in duplex DNA close to junctions with ss-DNA. Has a preference for 5'-flap structures, and promotes symmetrical cleavage of static and migrating Holliday junctions (HJs). Resolves HJs by generating two pairs of ligatable, nicked duplex products. The protein is Structure-specific endonuclease subunit SLX1 (Slx1b) of Mus musculus (Mouse).